The chain runs to 148 residues: Large ribosomal subunit protein bL9 (148 aa).

It belongs to the bacterial ribosomal protein bL9 family.

Binds to the 23S rRNA. The polypeptide is Large ribosomal subunit protein bL9 (Streptomyces avermitilis (strain ATCC 31267 / DSM 46492 / JCM 5070 / NBRC 14893 / NCIMB 12804 / NRRL 8165 / MA-4680)).